The primary structure comprises 343 residues: Fructose-1,6-bisphosphatase class 1 (343 aa).

Residues glutamate 90, aspartate 109, leucine 111, and aspartate 112 each coordinate Mg(2+). Residues 112-115 (DGSS) and asparagine 199 contribute to the substrate site. Position 271 (glutamate 271) interacts with Mg(2+).

The protein belongs to the FBPase class 1 family. Homotetramer. Mg(2+) is required as a cofactor.

The protein localises to the cytoplasm. It catalyses the reaction beta-D-fructose 1,6-bisphosphate + H2O = beta-D-fructose 6-phosphate + phosphate. It functions in the pathway carbohydrate biosynthesis; Calvin cycle. This chain is Fructose-1,6-bisphosphatase class 1, found in Rhodopseudomonas palustris (strain ATCC BAA-98 / CGA009).